The chain runs to 183 residues: Glutamyl-tRNA(Gln) amidotransferase subunit F, mitochondrial (183 aa).

Residues 1-23 (MSRMLNQIPRLITRSFRTSSVGY) constitute a mitochondrion transit peptide.

The protein belongs to the GatF family. Subunit of the heterotrimeric GatFAB amidotransferase (AdT) complex, composed of A, B and F subunits.

The protein localises to the mitochondrion inner membrane. It catalyses the reaction L-glutamyl-tRNA(Gln) + L-glutamine + ATP + H2O = L-glutaminyl-tRNA(Gln) + L-glutamate + ADP + phosphate + H(+). Functionally, allows the formation of correctly charged Gln-tRNA(Gln) through the transamidation of misacylated Glu-tRNA(Gln) in the mitochondria. The reaction takes place in the presence of glutamine and ATP through an activated gamma-phospho-Glu-tRNA(Gln). Required for proper protein synthesis within the mitochondrion. The sequence is that of Glutamyl-tRNA(Gln) amidotransferase subunit F, mitochondrial from Debaryomyces hansenii (strain ATCC 36239 / CBS 767 / BCRC 21394 / JCM 1990 / NBRC 0083 / IGC 2968) (Yeast).